The sequence spans 351 residues: Nicotinate-nucleotide--dimethylbenzimidazole phosphoribosyltransferase (351 aa).

The active-site Proton acceptor is the E318.

It belongs to the CobT family.

The enzyme catalyses 5,6-dimethylbenzimidazole + nicotinate beta-D-ribonucleotide = alpha-ribazole 5'-phosphate + nicotinate + H(+). It functions in the pathway nucleoside biosynthesis; alpha-ribazole biosynthesis; alpha-ribazole from 5,6-dimethylbenzimidazole: step 1/2. In terms of biological role, catalyzes the synthesis of alpha-ribazole-5'-phosphate from nicotinate mononucleotide (NAMN) and 5,6-dimethylbenzimidazole (DMB). This chain is Nicotinate-nucleotide--dimethylbenzimidazole phosphoribosyltransferase, found in Chloroflexus aurantiacus (strain ATCC 29366 / DSM 635 / J-10-fl).